A 355-amino-acid chain; its full sequence is Peptide chain release factor 1 (355 aa).

Gln231 is subject to N5-methylglutamine.

It belongs to the prokaryotic/mitochondrial release factor family. In terms of processing, methylated by PrmC. Methylation increases the termination efficiency of RF1.

The protein resides in the cytoplasm. In terms of biological role, peptide chain release factor 1 directs the termination of translation in response to the peptide chain termination codons UAG and UAA. This chain is Peptide chain release factor 1, found in Nautilia profundicola (strain ATCC BAA-1463 / DSM 18972 / AmH).